A 681-amino-acid polypeptide reads, in one-letter code: DNA ligase (681 aa).

NAD(+) contacts are provided by residues 35–39 (DAEYD), 84–85 (SL), and Glu115. Catalysis depends on Lys117, which acts as the N6-AMP-lysine intermediate. NAD(+) is bound by residues Arg138, Glu175, Lys293, and Lys317. Cys411, Cys414, Cys429, and Cys435 together coordinate Zn(2+). Residues 598-681 (RTNLAVPGKT…SLLRDTSSSE (84 aa)) enclose the BRCT domain.

This sequence belongs to the NAD-dependent DNA ligase family. LigA subfamily. The cofactor is Mg(2+). Requires Mn(2+) as cofactor.

The catalysed reaction is NAD(+) + (deoxyribonucleotide)n-3'-hydroxyl + 5'-phospho-(deoxyribonucleotide)m = (deoxyribonucleotide)n+m + AMP + beta-nicotinamide D-nucleotide.. Its function is as follows. DNA ligase that catalyzes the formation of phosphodiester linkages between 5'-phosphoryl and 3'-hydroxyl groups in double-stranded DNA using NAD as a coenzyme and as the energy source for the reaction. It is essential for DNA replication and repair of damaged DNA. This Nitrosomonas europaea (strain ATCC 19718 / CIP 103999 / KCTC 2705 / NBRC 14298) protein is DNA ligase.